The following is a 468-amino-acid chain: Lipase 1 (468 aa).

Residues Met-1–Ala-16 form the signal peptide. N-linked (GlcNAc...) asparagine glycosylation is present at Asn-79. Cys-112 and Cys-285 are joined by a disulfide. Ser-196 acts as the Charge relay system in catalysis. 2 N-linked (GlcNAc...) asparagine glycosylation sites follow: Asn-231 and Asn-319. Catalysis depends on charge relay system residues Asp-348 and His-381. A disulfide bridge links Cys-364 with Cys-409. N-linked (GlcNAc...) asparagine glycans are attached at residues Asn-417, Asn-422, and Asn-451.

It belongs to the AB hydrolase superfamily. Lipase family. Class Lip subfamily.

The protein resides in the secreted. It catalyses the reaction a triacylglycerol + H2O = a diacylglycerol + a fatty acid + H(+). Functionally, secreted lipase that is able to hydrolyze both the neutral triacylglycerols and the monopalmitate ester Tween 40, allowing the use of hydrolyzed products as carbon sources. Has broad lipolytic activity, which may be important for colonization and subsequent infection, therefore contributing to the persistence and virulence in human tissue. The polypeptide is Lipase 1 (Candida albicans (strain SC5314 / ATCC MYA-2876) (Yeast)).